A 245-amino-acid polypeptide reads, in one-letter code: tRNA (guanine-N(7)-)-methyltransferase (245 aa).

S-adenosyl-L-methionine-binding positions include glycine 70, 93-94, 126-127, and leucine 146; these read EI and NA. The active site involves aspartate 149. Residue 224–226 participates in S-adenosyl-L-methionine binding; it reads SEE.

Belongs to the class I-like SAM-binding methyltransferase superfamily. TrmB family.

The protein localises to the nucleus. The enzyme catalyses guanosine(46) in tRNA + S-adenosyl-L-methionine = N(7)-methylguanosine(46) in tRNA + S-adenosyl-L-homocysteine. It participates in tRNA modification; N(7)-methylguanine-tRNA biosynthesis. Catalyzes the formation of N(7)-methylguanine at position 46 (m7G46) in tRNA. The chain is tRNA (guanine-N(7)-)-methyltransferase from Aedes aegypti (Yellowfever mosquito).